Here is a 154-residue protein sequence, read N- to C-terminus: Prefoldin subunit alpha (154 aa).

Residues 92–102 (DNAVESLSTKQ) show a composition bias toward polar residues. A disordered region spans residues 92–154 (DNAVESLSTK…MQDQQPEDNE (63 aa)). Positions 103-114 (DALDNRIESLRD) are enriched in basic and acidic residues. Positions 128-148 (QQAQQMQQQMQQQQMQQMQDQ) are enriched in low complexity.

This sequence belongs to the prefoldin subunit alpha family. Heterohexamer of two alpha and four beta subunits.

The protein localises to the cytoplasm. Molecular chaperone capable of stabilizing a range of proteins. Seems to fulfill an ATP-independent, HSP70-like function in archaeal de novo protein folding. This Haloquadratum walsbyi (strain DSM 16790 / HBSQ001) protein is Prefoldin subunit alpha.